The following is a 391-amino-acid chain: Succinate--CoA ligase [ADP-forming] subunit beta (391 aa).

Residues 9 to 248 (KDILRKFGVA…ISEEDPFEVE (240 aa)) enclose the ATP-grasp domain. ATP-binding positions include K50, 57 to 59 (GRG), E103, M106, and E111. Mg(2+)-binding residues include N203 and D217. Substrate is bound by residues N268 and 325 to 327 (GIV).

It belongs to the succinate/malate CoA ligase beta subunit family. Heterotetramer of two alpha and two beta subunits. Mg(2+) serves as cofactor.

It catalyses the reaction succinate + ATP + CoA = succinyl-CoA + ADP + phosphate. The enzyme catalyses GTP + succinate + CoA = succinyl-CoA + GDP + phosphate. Its pathway is carbohydrate metabolism; tricarboxylic acid cycle; succinate from succinyl-CoA (ligase route): step 1/1. Its function is as follows. Succinyl-CoA synthetase functions in the citric acid cycle (TCA), coupling the hydrolysis of succinyl-CoA to the synthesis of either ATP or GTP and thus represents the only step of substrate-level phosphorylation in the TCA. The beta subunit provides nucleotide specificity of the enzyme and binds the substrate succinate, while the binding sites for coenzyme A and phosphate are found in the alpha subunit. The chain is Succinate--CoA ligase [ADP-forming] subunit beta from Chlorobium luteolum (strain DSM 273 / BCRC 81028 / 2530) (Pelodictyon luteolum).